The following is a 396-amino-acid chain: MPVDFHYGVRVDVTLLSKIRRVNEHIKSATKTGVVQVHGSACTPTLSVLSSVGTAGVLGLRIKNALTPLVGHTEGSGDVSFSFRNTSVGSGFTHTRELFGANVLDAGIAFYRKGEACDTGAQPQFVRTTISYGDNLTSTVHKSVVDQKGILPFHDRMEAGGRTTRLLLCGKTGAFLLKWLRQQKTKEDQTVTVSVSETLSIVTFSLGGVSKIIDFKPETKPVSGWDGLKGKKSVDVGVVHTDALSRVSLESLIAALRLCKVPGWFTPGLIWHSNEILEVEGVPTGCQSGDVKLSVLLLEVNRSVSAEGGESSQKVPDSIPDSRRQPELESPDSPPLTPVGPFGPLEDASEDAASVTSCPPAAPTKDSTKRPHKRRSDSSQSRDRGKVPKTTFNPLI.

Positions 306 to 396 are disordered; that stretch reads AEGGESSQKV…VPKTTFNPLI (91 aa). Residues 376-386 show a composition bias toward basic and acidic residues; sequence SDSSQSRDRGK.

It belongs to the herpesviridae DNA polymerase accessory subunit family. As to quaternary structure, homooligomerizes and adopts an oligomeric ring-shaped structure composed of 6 subunits. Forms a complex with the DNA-binding protein, the DNA polymerase subunit, and the alkaline exonuclease.

Its subcellular location is the virion tegument. The protein localises to the host nucleus. Plays an essential role in the viral lytic DNA replication by acting as the polymerase accessory subunit. Stimulates the viral DNA polymerase activity and appears to function with it as a holoenzyme. Increases the processivity of the viral polymerase, probably by acting as a sliding clamp that prevents dissociation of the polymerase from the active template. This is DNA polymerase processivity factor (ORF59) from Homo sapiens (Human).